Reading from the N-terminus, the 87-residue chain is Antitoxin YefM (87 aa).

The protein belongs to the phD/YefM antitoxin family. Forms a complex with YoeB which inhibits its toxin activity.

In terms of biological role, antitoxin component of a type II toxin-antitoxin (TA) system. A probable antitoxin for the putative mRNA interferase YeoB. The polypeptide is Antitoxin YefM (Streptomyces coelicolor (strain ATCC BAA-471 / A3(2) / M145)).